We begin with the raw amino-acid sequence, 124 residues long: MNFLLAGIGASIGAMLRYAITNYGKKHWEWIGNKFSNLPTPTLFINLTGAFILGFIFGIKTNVFIYAIVGTGVLGGYTTFSTMNTELVELYKSKNYRGFIFYALSSYLGGLILVFVGYYLAILF.

Transmembrane regions (helical) follow at residues 1–21, 36–58, 63–85, and 104–124; these read MNFL…YAIT, SNLP…FIFG, VFIY…TMNT, and LSSY…AILF. The Na(+) site is built by G75 and T78.

The protein belongs to the fluoride channel Fluc/FEX (TC 1.A.43) family. As to quaternary structure, heterodimer composed of FluC1 and FluC2. Neither FluC1 nor FluC2 alone catalyzes fluoride efflux from liposomes.

It localises to the cell membrane. The catalysed reaction is fluoride(in) = fluoride(out). Na(+) is not transported, but it plays an essential structural role and its presence is essential for fluoride channel function. Functionally, fluoride-specific ion channel. Important for reducing fluoride concentration in the cell, thus reducing its toxicity. The sequence is that of Fluoride-specific ion channel FluC 2 from Lactobacillus acidophilus (strain ATCC 700396 / NCK56 / N2 / NCFM).